Here is a 321-residue protein sequence, read N- to C-terminus: Glycerol-3-phosphate dehydrogenase [NAD(P)+] (321 aa).

Residues S10, F11, R31, R32, and K104 each contribute to the NADPH site. 2 residues coordinate sn-glycerol 3-phosphate: K104 and G132. A136 lines the NADPH pocket. Sn-glycerol 3-phosphate is bound by residues K186, D238, S248, R249, and N250. K186 (proton acceptor) is an active-site residue. R249 contributes to the NADPH binding site. An NADPH-binding site is contributed by E272.

It belongs to the NAD-dependent glycerol-3-phosphate dehydrogenase family.

Its subcellular location is the cytoplasm. It catalyses the reaction sn-glycerol 3-phosphate + NAD(+) = dihydroxyacetone phosphate + NADH + H(+). The catalysed reaction is sn-glycerol 3-phosphate + NADP(+) = dihydroxyacetone phosphate + NADPH + H(+). Catalyzes the reduction of the glycolytic intermediate dihydroxyacetone phosphate (DHAP) to sn-glycerol 3-phosphate (G3P). This chain is Glycerol-3-phosphate dehydrogenase [NAD(P)+], found in Methanothermobacter thermautotrophicus (strain ATCC 29096 / DSM 1053 / JCM 10044 / NBRC 100330 / Delta H) (Methanobacterium thermoautotrophicum).